Reading from the N-terminus, the 520-residue chain is Ribonuclease Y (520 aa).

Residues 3–23 (IVIVVISILLALIVGIVVGYL) traverse the membrane as a helical segment. Over residues 81–118 (RMEAQKQENRLMQKEENLDRKSETLDKRESSLESKEQS) the composition is skewed to basic and acidic residues. The segment at 81–125 (RMEAQKQENRLMQKEENLDRKSETLDKRESSLESKEQSLTEQQQQ) is disordered. The KH domain occupies 210-273 (TVSVVNLPND…EIARMALEKL (64 aa)). An HD domain is found at 336–429 (GLKHSAEVAY…VAAADALSAA (94 aa)).

The protein belongs to the RNase Y family.

It is found in the cell membrane. In terms of biological role, endoribonuclease that initiates mRNA decay. The sequence is that of Ribonuclease Y from Oceanobacillus iheyensis (strain DSM 14371 / CIP 107618 / JCM 11309 / KCTC 3954 / HTE831).